Here is a 254-residue protein sequence, read N- to C-terminus: Thiazole synthase (254 aa).

K95 serves as the catalytic Schiff-base intermediate with DXP. 1-deoxy-D-xylulose 5-phosphate-binding positions include G156, 182–183 (AG), and 204–205 (NT).

Belongs to the ThiG family. Homotetramer. Forms heterodimers with either ThiH or ThiS.

It localises to the cytoplasm. The catalysed reaction is [ThiS sulfur-carrier protein]-C-terminal-Gly-aminoethanethioate + 2-iminoacetate + 1-deoxy-D-xylulose 5-phosphate = [ThiS sulfur-carrier protein]-C-terminal Gly-Gly + 2-[(2R,5Z)-2-carboxy-4-methylthiazol-5(2H)-ylidene]ethyl phosphate + 2 H2O + H(+). It participates in cofactor biosynthesis; thiamine diphosphate biosynthesis. Its function is as follows. Catalyzes the rearrangement of 1-deoxy-D-xylulose 5-phosphate (DXP) to produce the thiazole phosphate moiety of thiamine. Sulfur is provided by the thiocarboxylate moiety of the carrier protein ThiS. In vitro, sulfur can be provided by H(2)S. The chain is Thiazole synthase from Shewanella oneidensis (strain ATCC 700550 / JCM 31522 / CIP 106686 / LMG 19005 / NCIMB 14063 / MR-1).